Reading from the N-terminus, the 447-residue chain is Probable cytosol aminopeptidase (447 aa).

Mn(2+)-binding residues include Lys218 and Asp223. The active site involves Lys230. Residues Asp241, Asp300, and Glu302 each contribute to the Mn(2+) site. Arg304 is an active-site residue.

The protein belongs to the peptidase M17 family. The cofactor is Mn(2+).

Its subcellular location is the cytoplasm. The catalysed reaction is Release of an N-terminal amino acid, Xaa-|-Yaa-, in which Xaa is preferably Leu, but may be other amino acids including Pro although not Arg or Lys, and Yaa may be Pro. Amino acid amides and methyl esters are also readily hydrolyzed, but rates on arylamides are exceedingly low.. The enzyme catalyses Release of an N-terminal amino acid, preferentially leucine, but not glutamic or aspartic acids.. Its function is as follows. Presumably involved in the processing and regular turnover of intracellular proteins. Catalyzes the removal of unsubstituted N-terminal amino acids from various peptides. The chain is Probable cytosol aminopeptidase (pepA) from Mycoplasma genitalium (strain ATCC 33530 / DSM 19775 / NCTC 10195 / G37) (Mycoplasmoides genitalium).